Consider the following 476-residue polypeptide: Probable serine carboxypeptidase CPVL (476 aa).

Residues 1–22 form the signal peptide; sequence MVGTMWKVIVSLVLLMPGSCDG. N-linked (GlcNAc...) asparagine glycosylation is found at asparagine 81 and asparagine 132. Serine 204 is an active-site residue. Asparagine 307 and asparagine 346 each carry an N-linked (GlcNAc...) asparagine glycan. Active-site residues include aspartate 388 and histidine 448.

This sequence belongs to the peptidase S10 family.

Functionally, may be involved in the digestion of phagocytosed particles in the lysosome, participation in an inflammatory protease cascade, and trimming of peptides for antigen presentation. The chain is Probable serine carboxypeptidase CPVL (CPVL) from Pongo abelii (Sumatran orangutan).